The sequence spans 376 residues: Sulfate/thiosulfate import ATP-binding protein CysA (376 aa).

The 235-residue stretch at 3-237 (IRLDNISKHF…PNSRFVFDFF (235 aa)) folds into the ABC transporter domain. 35–42 (GPSGSGKT) contacts ATP.

This sequence belongs to the ABC transporter superfamily. Sulfate/tungstate importer (TC 3.A.1.6) family. As to quaternary structure, the complex is composed of two ATP-binding proteins (CysA), two transmembrane proteins (CysT and CysW) and a solute-binding protein (CysP).

Its subcellular location is the cell inner membrane. It carries out the reaction sulfate(out) + ATP + H2O = sulfate(in) + ADP + phosphate + H(+). The catalysed reaction is thiosulfate(out) + ATP + H2O = thiosulfate(in) + ADP + phosphate + H(+). Functionally, part of the ABC transporter complex CysAWTP involved in sulfate/thiosulfate import. Responsible for energy coupling to the transport system. This is Sulfate/thiosulfate import ATP-binding protein CysA from Vibrio cholerae serotype O1 (strain ATCC 39315 / El Tor Inaba N16961).